The chain runs to 121 residues: Large ribosomal subunit protein bL19 (121 aa).

Belongs to the bacterial ribosomal protein bL19 family.

In terms of biological role, this protein is located at the 30S-50S ribosomal subunit interface and may play a role in the structure and function of the aminoacyl-tRNA binding site. The protein is Large ribosomal subunit protein bL19 of Chlamydia caviae (strain ATCC VR-813 / DSM 19441 / 03DC25 / GPIC) (Chlamydophila caviae).